Reading from the N-terminus, the 420-residue chain is Tyrosine--tRNA ligase (420 aa).

Y36 contacts L-tyrosine. Positions 41–50 (PTADSLHIGH) match the 'HIGH' region motif. Y170 and Q174 together coordinate L-tyrosine. A 'KMSKS' region motif is present at residues 231 to 235 (KFGKS). K234 lines the ATP pocket. An S4 RNA-binding domain is found at 353-420 (TNIVEVLIET…KKKYFMVNYQ (68 aa)).

This sequence belongs to the class-I aminoacyl-tRNA synthetase family. TyrS type 1 subfamily. Homodimer.

The protein localises to the cytoplasm. It carries out the reaction tRNA(Tyr) + L-tyrosine + ATP = L-tyrosyl-tRNA(Tyr) + AMP + diphosphate + H(+). Functionally, catalyzes the attachment of tyrosine to tRNA(Tyr) in a two-step reaction: tyrosine is first activated by ATP to form Tyr-AMP and then transferred to the acceptor end of tRNA(Tyr). This chain is Tyrosine--tRNA ligase, found in Staphylococcus aureus (strain COL).